The following is a 601-amino-acid chain: Jacalin-related lectin 3 (601 aa).

Jacalin-type lectin domains are found at residues 13 to 155 (PASL…HTQP), 240 to 382 (AKTY…HVME), and 438 to 583 (PSGP…HMQH).

This sequence belongs to the jacalin lectin family.

This chain is Jacalin-related lectin 3 (JAL3), found in Arabidopsis thaliana (Mouse-ear cress).